The chain runs to 138 residues: Fusaristatin A biosynthesis cluster protein FGSG_08206 (138 aa).

Residues 33–130 (VHRVTMFKMP…TIDGMMTVFF (98 aa)) form the Stress-response A/B barrel domain.

It functions in the pathway secondary metabolite biosynthesis. In terms of biological role, part of the gene cluster that mediates the biosynthesis of the lipopeptide fusaristatin A. Fusaristatin A consists of a polyketide chain linked to three amino acid residues glutamine (Gln), dehydroalanine (dehydro-Ala), and beta-aminoisobutyric acid. The biosynthesis starts with formation of a linear polyketide chain by the highly reducing polyketide synthase PKS6. The gene cluster does not contain an acyl-CoA ligase or an acyl-transferase, and it is therefore predicted that the polyketide is transferred directly to the nonribosomal peptide synthetase NRPS7. Modules 1-3 from NRPS7 incorporate dehydro-Ala, Gln, and beta-aminoisobutyric acid in the compound, which is released by cyclization. The beta-aminoisobutyric acid units are most likely not freely available to the NRPS, but can be synthesized from thymine, which requires a dehydrogenase, a monooxygenase, and an aminotransferase. The fusaristatin A cluster contains a cytochrome P450 monooxygenase (FGSG_08207) and an aminotransferase (FGSG_17085), which theoretically can perform two of the enzymatic steps. The enzymes may however also be involved in biosynthesis of dehydroalanine or modification of the polyketide. The dehydro-Ala residue can be a result of cyclization, where serine is dehydrated. The last gene of the cluster encodes a protein with an A/B barrel domain found in variable enzymes, which hampers functional prediction. This chain is Fusaristatin A biosynthesis cluster protein FGSG_08206, found in Gibberella zeae (strain ATCC MYA-4620 / CBS 123657 / FGSC 9075 / NRRL 31084 / PH-1) (Wheat head blight fungus).